We begin with the raw amino-acid sequence, 556 residues long: Insulin-like growth factor 2 mRNA-binding protein 2 (556 aa).

2 RRM domains span residues 3 to 76 and 82 to 157; these read NKLY…YSVS and RKIQ…YIPD. Ser-11 bears the Phosphoserine mark. The segment at 156–188 is disordered; sequence PDEEVSSPSPPQRAQRGDHSSREQGHAPGGTSQ. 2 positions are modified to phosphoserine: Ser-162 and Ser-164. Over residues 170 to 180 the composition is skewed to basic and acidic residues; sequence QRGDHSSREQG. KH domains lie at 193 to 258, 274 to 341, 384 to 449, and 466 to 532; these read DFPL…CRMI, EIPL…EIEI, QEIV…QGRI, and KLEA…QRKI. Thr-507 is modified (phosphothreonine).

Belongs to the RRM IMP/VICKZ family. Can form homooligomers and heterooligomers with IGF2BP1 and IGF2BP3 in an RNA-dependent manner. Interacts with HNRPD. Interacts with IGF2BP1. Interacts with ELAVL1, DHX9, HNRNPU, MATR3 and PABPC1.

It is found in the nucleus. The protein resides in the cytoplasm. Its subcellular location is the P-body. It localises to the stress granule. In terms of biological role, RNA-binding factor that recruits target transcripts to cytoplasmic protein-RNA complexes (mRNPs). This transcript 'caging' into mRNPs allows mRNA transport and transient storage. It also modulates the rate and location at which target transcripts encounter the translational apparatus and shields them from endonuclease attacks or microRNA-mediated degradation. Preferentially binds to N6-methyladenosine (m6A)-containing mRNAs and increases their stability. Binds to the 5'-UTR of the insulin-like growth factor 2 (IGF2) mRNAs. Binding is isoform-specific. Binds to beta-actin/ACTB and MYC transcripts. Increases MYC mRNA stability by binding to the coding region instability determinant (CRD) and binding is enhanced by m6A-modification of the CRD. The polypeptide is Insulin-like growth factor 2 mRNA-binding protein 2 (IGF2BP2) (Pongo abelii (Sumatran orangutan)).